A 240-amino-acid chain; its full sequence is Probable transcriptional regulatory protein YrbC (240 aa).

Belongs to the TACO1 family.

The protein localises to the cytoplasm. This is Probable transcriptional regulatory protein YrbC (yrbC) from Bacillus subtilis (strain 168).